Reading from the N-terminus, the 251-residue chain is Diphthine synthase (251 aa).

Residues Asp83, Leu86, 111–112 (SI), Leu163, and Leu205 contribute to the S-adenosyl-L-methionine site.

Belongs to the diphthine synthase family. As to quaternary structure, homodimer.

The catalysed reaction is 2-[(3S)-amino-3-carboxypropyl]-L-histidyl-[translation elongation factor 2] + 3 S-adenosyl-L-methionine = diphthine-[translation elongation factor 2] + 3 S-adenosyl-L-homocysteine + 3 H(+). Its pathway is protein modification; peptidyl-diphthamide biosynthesis. Its function is as follows. S-adenosyl-L-methionine-dependent methyltransferase that catalyzes the trimethylation of the amino group of the modified target histidine residue in translation elongation factor 2 (EF-2), to form an intermediate called diphthine. The three successive methylation reactions represent the second step of diphthamide biosynthesis. The sequence is that of Diphthine synthase from Pyrobaculum calidifontis (strain DSM 21063 / JCM 11548 / VA1).